We begin with the raw amino-acid sequence, 114 residues long: uncharacterized protein (114 aa).

Positions 90 to 114 are disordered; that stretch reads VESSQKRKPEESTIGMDAPKKMKRG.

This is an uncharacterized protein from Caenorhabditis elegans.